The following is a 132-amino-acid chain: MAAPKSAARKPRKKEKKNIAVGQAHIKSTFNNTIVSITDTTGAVLSWASSGGVGFKGSRKSTPYAAQLAAESAARQAQEHGMKKVDVFVKGPGSGRETAIRSLQAAGLEVGSINDVTPQAHNGCRPPKRRRV.

The protein belongs to the universal ribosomal protein uS11 family. Part of the 30S ribosomal subunit. Interacts with proteins S7 and S18. Binds to IF-3.

Located on the platform of the 30S subunit, it bridges several disparate RNA helices of the 16S rRNA. Forms part of the Shine-Dalgarno cleft in the 70S ribosome. The polypeptide is Small ribosomal subunit protein uS11 (Leifsonia xyli subsp. xyli (strain CTCB07)).